The primary structure comprises 493 residues: Transcript termination protein A18 (493 aa).

The region spanning 100 to 256 is the Helicase ATP-binding domain; the sequence is MIESKRPLYI…NSIINIAKLS (157 aa). Residue 113–120 coordinates ATP; sequence LACGFGKT. The DESH box signature appears at 206-209; that stretch reads DESH.

The protein belongs to the helicase family. Poxviruses subfamily. In terms of assembly, interacts with G2. Might be part of a transcription complex composed at least of G2, A18, and H5.

The protein localises to the virion. DNA helicase which seems to act as a postreplicative transcription termination factor. Involved in ATP-dependent release of nascent RNA. Forms a stable complex with single-stranded DNA, and to a lesser extent RNA. The chain is Transcript termination protein A18 from Homo sapiens (Human).